The primary structure comprises 532 residues: Sodium-dependent lysophosphatidylcholine symporter 1-A (532 aa).

At 1–40 (MARGEGAEQFSSGLLPTAKSVTQNEIKMVKLPKQQERKRA) the chain is on the cytoplasmic side. Residues 41–70 (LTVWSKVCFAIGGAPYQITGTALGFFLQIF) traverse the membrane as a helical segment. At 71-81 (LLDVAQLNPLN) the chain is on the extracellular side. The helical transmembrane segment at 82–102 (ASVILFVGRAWDAVTDPTVGF) threads the bilayer. Over 103 to 114 (LVSRTPWTRHGR) the chain is Cytoplasmic. The chain crosses the membrane as a helical span at residues 115-134 (MMPWILVSTIPAVLCYFLIW). The Extracellular segment spans residues 135–144 (VVPPIEQGKM). Residues 145–169 (MWYLLFYCLFQTLQTCFHVPYSALT) form a helical membrane-spanning segment. Over 170–176 (MFISTEQ) the chain is Cytoplasmic. A helical transmembrane segment spans residues 177–208 (RERDSATAYRMTVEVFGTVVGTAIQGQIVGMA). Over 209–232 (NTPCKNNTSPNNSSNDLIQSNNSH) the chain is Extracellular. A disulfide bridge connects residues C212 and C464. Residues N214, N220, and N229 are each glycosylated (N-linked (GlcNAc...) asparagine). The chain crosses the membrane as a helical span at residues 233 to 266 (IPLKSNIFDERCAYMIASAVISLIYVVCAAVLFF). Over 267–297 (GVREQDVQGELKAQKRVSFQKGLRLVMGHGP) the chain is Cytoplasmic. A helical transmembrane segment spans residues 298–324 (YVKLVLAFLFTSLAFMLLEGNFAVFIK). At 325 to 335 (YTLGFREDFQN) the chain is on the extracellular side. Residues 336–354 (ILLVIMVSATVSIPMWQWF) form a helical membrane-spanning segment. Topologically, residues 355–358 (LCRF) are cytoplasmic. A helical transmembrane segment spans residues 359–380 (GKKTAVYIGITWAVPFMILVVS). Residues 381 to 383 (VNS) lie on the Extracellular side of the membrane. The chain crosses the membrane as a helical span at residues 384–420 (SLIVSYIVSIAAGVSVGAAFLLPWSMLPDVVDDFKLQ). Residues 421–430 (NPTSQGHEAI) lie on the Cytoplasmic side of the membrane. The helical transmembrane segment at 431–457 (FYSFYVFFTKFASGVSLGVSTLALSFA) threads the bilayer. Over 458–469 (GYETGVCVQSDS) the chain is Extracellular. The helical transmembrane segment at 470 to 493 (VNLTLKLLVSAAPVSLIALGLLIF) threads the bilayer. Residues 494 to 532 (MTYPIDEERREYNNKQLQLLLRNEEEEDEMEVLKPDITA) are Cytoplasmic-facing.

Belongs to the major facilitator superfamily. Expressed in the developing nervous system.

Its subcellular location is the cell membrane. The protein localises to the endoplasmic reticulum membrane. The catalysed reaction is a 1-acyl-sn-glycero-3-phosphocholine(in) + Na(+)(in) = a 1-acyl-sn-glycero-3-phosphocholine(out) + Na(+)(out). The enzyme catalyses 1-(4Z,7Z,10Z,13Z,16Z,19Z-docosahexaenoyl)-sn-glycero-3-phosphocholine(in) + Na(+)(in) = 1-(4Z,7Z,10Z,13Z,16Z,19Z-docosahexaenoyl)-sn-glycero-3-phosphocholine(out) + Na(+)(out). It carries out the reaction 1-(9Z-octadecenoyl)-sn-glycero-3-phosphocholine(in) + Na(+)(in) = 1-(9Z-octadecenoyl)-sn-glycero-3-phosphocholine(out) + Na(+)(out). It catalyses the reaction 1-hexadecanoyl-sn-glycero-3-phosphocholine(in) + Na(+)(in) = 1-hexadecanoyl-sn-glycero-3-phosphocholine(out) + Na(+)(out). The catalysed reaction is a 1-acyl-sn-glycero-3-phosphoethanolamine(in) + Na(+)(in) = a 1-acyl-sn-glycero-3-phosphoethanolamine(out) + Na(+)(out). Functionally, sodium-dependent lysophosphatidylcholine (LPC) symporter, which plays an essential role for blood-brain barrier formation and function. Specifically expressed in endothelium of the blood-brain barrier of micro-vessels and transports LPC into the brain. Transport of LPC is essential because it constitutes the major mechanism by which docosahexaenoic acid (DHA), an omega-3 fatty acid that is essential for normal brain growth and cognitive function, enters the brain. Transports LPC carrying long-chain fatty acids such LPC oleate and LPC palmitate with a minimum acyl chain length of 14 carbons. Does not transport docosahexaenoic acid in unesterified fatty acid. The protein is Sodium-dependent lysophosphatidylcholine symporter 1-A (mfsd2aa) of Danio rerio (Zebrafish).